Reading from the N-terminus, the 529-residue chain is Peptide chain release factor 3 (529 aa).

One can recognise a tr-type G domain in the interval 11–280 (AKRRTFAIIS…GLVEWAPAPM (270 aa)). GTP contacts are provided by residues 20–27 (SHPDAGKT), 88–92 (DTPGH), and 142–145 (NKLD).

Belongs to the TRAFAC class translation factor GTPase superfamily. Classic translation factor GTPase family. PrfC subfamily.

Its subcellular location is the cytoplasm. Its function is as follows. Increases the formation of ribosomal termination complexes and stimulates activities of RF-1 and RF-2. It binds guanine nucleotides and has strong preference for UGA stop codons. It may interact directly with the ribosome. The stimulation of RF-1 and RF-2 is significantly reduced by GTP and GDP, but not by GMP. The protein is Peptide chain release factor 3 of Shigella sonnei (strain Ss046).